A 902-amino-acid polypeptide reads, in one-letter code: Chloride channel protein 2 (902 aa).

Topologically, residues 1-89 are cytoplasmic; the sequence is MAASAAAAGE…RCHKFLVSRV (89 aa). The interval 18–36 is essential for channel gating by both voltage and cell volume; that stretch reads QYEQTLMYGRYTQELGAFA. Thr-22 is modified (phosphothreonine). Positions 38-51 are modulates channel gating by both voltage and cell volume; that stretch reads EEAARIRLGGPEPW. The next 2 helical transmembrane spans lie at 90–123 and 132–157; these read GEDW…AQQW and ILLQ…TQIL. Residues 163–167 carry the Selectivity filter part_1 motif; the sequence is GSGIP. Positions 166–173 form an intramembrane region, helical; the sequence is IPEMKTIL. Transmembrane regions (helical) follow at residues 182-200 and 207-225; these read LTLK…ALGS and EGPF…SKFL. Residues 205-209 carry the Selectivity filter part_2 motif; the sequence is GKEGP. Intramembrane regions (helical) lie at residues 241-253 and 257-265; these read MLAA…VGCC and PIGGVLFSI. 5 consecutive transmembrane segments (helical) span residues 277-297, 323-351, 360-379, 431-451, and 459-482; these read YWRG…LAVW, LPAF…VQVM, FLMR…ISTL, ANVF…SALA, and GAFM…MAAW. The Selectivity filter part_3 signature appears at 459 to 463; sequence GAFMP. Residues 499–513 constitute an intramembrane region (helical); the sequence is GGYAVVGAAALAGAV. The note=Loop between two helices intramembrane region spans 514–515; the sequence is TH. The helical intramembrane region spans 516-527; the sequence is TVSTAVIVFELT. The note=Loop between two helices intramembrane region spans 528-532; it reads GQIAH. The chain crosses the membrane as a helical span at residues 533-550; that stretch reads ILPVMIAVILANAVAQSL. Over 551-902 the chain is Cytoplasmic; sequence QPSLYDSIIR…SPSDSDDKCQ (352 aa). Residues 586-644 enclose the CBS 1 domain; sequence MVRDVPYVALNCTFRDLRLALHRTKGRMLALVESSESMILLGSIERSQVVTLLGAQLSA. Residues 648 to 748 are disordered; it reads RQHIQERRKA…TSDLEKPESC (101 aa). 2 stretches are compositionally biased toward polar residues: residues 671 to 683 and 706 to 719; these read PESS…NTED and SNAS…TGSM. The CBS 2 domain occupies 794 to 854; that stretch reads IDPAPFQLVE…GSVTAQGVKV (61 aa). The Basolateral membrane sorting signature appears at 816-817; sequence LL. The segment at 860-902 is disordered; the sequence is SFRDSATSSSDTETTEVHALWGPHSCHGLPRDGSPSDSDDKCQ.

This sequence belongs to the chloride channel (TC 2.A.49) family. ClC-2/CLCN2 subfamily. As to quaternary structure, homodimer. Interacts with auxiliary subunit HEPACAM.

The protein localises to the cell membrane. It localises to the basolateral cell membrane. The protein resides in the cell projection. Its subcellular location is the dendritic spine membrane. It is found in the axon. The enzyme catalyses chloride(in) = chloride(out). The catalysed reaction is thiocyanate(in) = thiocyanate(out). It catalyses the reaction bromide(in) = bromide(out). It carries out the reaction nitrate(in) = nitrate(out). The enzyme catalyses iodide(out) = iodide(in). Common gate kinetics are down-regulated by intracellular ATP. Inhibited by AK-42, a derivative of meclofenamate. Inhibited by Cd(2+). Inhibited by Zn(2+) and PKC activation. Inhibited at acidic pH. CCLN2:HEPACAM channel conductance is up-regulated upon hypo-osmolarity. Its function is as follows. Voltage-gated and osmosensitive chloride channel. Forms a homodimeric channel where each subunit has its own ion conduction pathway. Conducts double-barreled currents controlled by two types of gates, two fast glutamate gates that control each subunit independently and a slow common gate that opens and shuts off both subunits simultaneously. Displays inward rectification currents activated upon membrane hyperpolarization and extracellular hypotonicity. Contributes to chloride conductance involved in neuron excitability. In hippocampal neurons, generates a significant part of resting membrane conductance and provides an additional chloride efflux pathway to prevent chloride accumulation in dendrites upon GABA receptor activation. In glia, associates with the auxiliary subunit HEPACAM/GlialCAM at astrocytic processes and myelinated fiber tracts where it may regulate transcellular chloride flux buffering extracellular chloride and potassium concentrations. Regulates aldosterone production in adrenal glands. The opening of CLCN2 channels at hyperpolarized membrane potentials in the glomerulosa causes cell membrane depolarization, activation of voltage-gated calcium channels and increased expression of aldosterone synthase, the rate-limiting enzyme for aldosterone biosynthesis. Contributes to chloride conductance in retinal pigment epithelium involved in phagocytosis of shed photoreceptor outer segments and photoreceptor renewal. Conducts chloride currents at the basolateral membrane of epithelial cells with a role in chloride reabsorption rather than secretion. Permeable to small monovalent anions with chloride &gt; thiocyanate &gt; bromide &gt; nitrate &gt; iodide ion selectivity. The polypeptide is Chloride channel protein 2 (CLCN2) (Cavia porcellus (Guinea pig)).